Consider the following 241-residue polypeptide: MSTKPKPRYRRILLKMSGEALMGNQAFGLDPKVVNRIADEVRQLHEAGVQVAIVIGGGNLFRGAQLAALGMERVTGDHMGMLATLMNSLAMQDALEQIGVPVRTVSALRVDEICEPYIRRRAIRHLEKGNVVISAAGTGNPFFTTDSAASLRAIELEVDAMFKATKVDGIYTKDPNRYDDAVKYHDLSYQKALTDNLGVMDATSIVMCRDNHMPLIVFDMTKAGEIIRAVFGEDVGTIVHA.

15-18 (KMSG) serves as a coordination point for ATP. Residue Gly-57 coordinates UMP. ATP contacts are provided by Gly-58 and Arg-62. Residues Asp-77 and 138–145 (TGNPFFTT) each bind UMP. The ATP site is built by Thr-165, Tyr-171, and Asp-174.

It belongs to the UMP kinase family. Homohexamer.

The protein localises to the cytoplasm. It carries out the reaction UMP + ATP = UDP + ADP. It functions in the pathway pyrimidine metabolism; CTP biosynthesis via de novo pathway; UDP from UMP (UMPK route): step 1/1. With respect to regulation, inhibited by UTP. Its function is as follows. Catalyzes the reversible phosphorylation of UMP to UDP. This Dichelobacter nodosus (strain VCS1703A) protein is Uridylate kinase.